Consider the following 185-residue polypeptide: dCTP deaminase (185 aa).

Residues 108-113 (KSTYAR), 132-134 (TLE), Gln153, Tyr167, and Gln177 contribute to the dCTP site. Glu134 serves as the catalytic Proton donor/acceptor.

It belongs to the dCTP deaminase family. Homotrimer.

The catalysed reaction is dCTP + H2O + H(+) = dUTP + NH4(+). Its pathway is pyrimidine metabolism; dUMP biosynthesis; dUMP from dCTP (dUTP route): step 1/2. In terms of biological role, catalyzes the deamination of dCTP to dUTP. This is dCTP deaminase from Pelagibacter ubique (strain HTCC1062).